An 88-amino-acid chain; its full sequence is MALKERIGTVVSDKMDKTVVVAVINRYPHPTYKKIVSRTTRYKAHDPENTCVTGDRVKIRETRPLSAQKRWAIEEILNKTNQAKEVKK.

It belongs to the universal ribosomal protein uS17 family. As to quaternary structure, part of the 30S ribosomal subunit.

In terms of biological role, one of the primary rRNA binding proteins, it binds specifically to the 5'-end of 16S ribosomal RNA. This chain is Small ribosomal subunit protein uS17, found in Prochlorococcus marinus (strain MIT 9215).